The sequence spans 271 residues: Ribosomal RNA small subunit methyltransferase A (271 aa).

Asparagine 18, leucine 20, glycine 45, glutamate 66, aspartate 91, and asparagine 112 together coordinate S-adenosyl-L-methionine.

Belongs to the class I-like SAM-binding methyltransferase superfamily. rRNA adenine N(6)-methyltransferase family. RsmA subfamily.

It is found in the cytoplasm. The catalysed reaction is adenosine(1518)/adenosine(1519) in 16S rRNA + 4 S-adenosyl-L-methionine = N(6)-dimethyladenosine(1518)/N(6)-dimethyladenosine(1519) in 16S rRNA + 4 S-adenosyl-L-homocysteine + 4 H(+). Its function is as follows. Specifically dimethylates two adjacent adenosines (A1518 and A1519) in the loop of a conserved hairpin near the 3'-end of 16S rRNA in the 30S particle. May play a critical role in biogenesis of 30S subunits. This Vibrio cholerae serotype O1 (strain ATCC 39315 / El Tor Inaba N16961) protein is Ribosomal RNA small subunit methyltransferase A.